The primary structure comprises 232 residues: LexA repressor (232 aa).

A DNA-binding region (H-T-H motif) is located at residues 26-46 (FDEMKDALDLRSKSGIHRLIT). Residues S153 and K191 each act as for autocatalytic cleavage activity in the active site.

It belongs to the peptidase S24 family. In terms of assembly, homodimer.

It catalyses the reaction Hydrolysis of Ala-|-Gly bond in repressor LexA.. Functionally, represses a number of genes involved in the response to DNA damage (SOS response), including recA and lexA. In the presence of single-stranded DNA, RecA interacts with LexA causing an autocatalytic cleavage which disrupts the DNA-binding part of LexA, leading to derepression of the SOS regulon and eventually DNA repair. This is LexA repressor from Bradyrhizobium sp. (strain BTAi1 / ATCC BAA-1182).